An 861-amino-acid polypeptide reads, in one-letter code: Probable linoleate 9S-lipoxygenase 8 (861 aa).

Residues 33–160 (FTDLASSLTG…NYKSDRIFFA (128 aa)) form the PLAT domain. The 699-residue stretch at 163-861 (PYLPSETPEL…GKGIPNSVSI (699 aa)) folds into the Lipoxygenase domain. Positions 220–245 (TLGGSAEYPYPRRGRTGRPPTRTDPK) are disordered. Residues His522, His527, His713, Asn717, and Ile861 each coordinate Fe cation.

It belongs to the lipoxygenase family. In terms of assembly, monomer. Fe cation is required as a cofactor.

The protein localises to the cytoplasm. It catalyses the reaction (9Z,12Z)-octadecadienoate + O2 = (9S)-hydroperoxy-(10E,12Z)-octadecadienoate. The protein operates within lipid metabolism; oxylipin biosynthesis. Its function is as follows. Plant lipoxygenases may be involved in a number of diverse aspects of plant physiology including growth and development, pest resistance, and senescence or responses to wounding. Catalyzes the hydroperoxidation of lipids containing a cis,cis-1,4-pentadiene structure. The protein is Probable linoleate 9S-lipoxygenase 8 (LOX1.8) of Solanum tuberosum (Potato).